A 273-amino-acid polypeptide reads, in one-letter code: Formamidopyrimidine-DNA glycosylase (273 aa).

Residue Pro-2 is the Schiff-base intermediate with DNA of the active site. Glu-3 functions as the Proton donor in the catalytic mechanism. Lys-58 acts as the Proton donor; for beta-elimination activity in catalysis. DNA contacts are provided by His-92, Arg-111, and Lys-153. The FPG-type zinc finger occupies 238-272; sequence KVYGREGQSCLSCSSTIIKIKHSGRSTFYCKTCQY. Arg-262 serves as the catalytic Proton donor; for delta-elimination activity.

It belongs to the FPG family. In terms of assembly, monomer. Requires Zn(2+) as cofactor.

It carries out the reaction Hydrolysis of DNA containing ring-opened 7-methylguanine residues, releasing 2,6-diamino-4-hydroxy-5-(N-methyl)formamidopyrimidine.. It catalyses the reaction 2'-deoxyribonucleotide-(2'-deoxyribose 5'-phosphate)-2'-deoxyribonucleotide-DNA = a 3'-end 2'-deoxyribonucleotide-(2,3-dehydro-2,3-deoxyribose 5'-phosphate)-DNA + a 5'-end 5'-phospho-2'-deoxyribonucleoside-DNA + H(+). Its function is as follows. Involved in base excision repair of DNA damaged by oxidation or by mutagenic agents. Acts as a DNA glycosylase that recognizes and removes damaged bases. Has a preference for oxidized purines, such as 7,8-dihydro-8-oxoguanine (8-oxoG). Has AP (apurinic/apyrimidinic) lyase activity and introduces nicks in the DNA strand. Cleaves the DNA backbone by beta-delta elimination to generate a single-strand break at the site of the removed base with both 3'- and 5'-phosphates. This is Formamidopyrimidine-DNA glycosylase from Rickettsia africae (strain ESF-5).